Here is a 270-residue protein sequence, read N- to C-terminus: Glutamate racemase (270 aa).

Residues 14-15 and 46-47 each bind substrate; these read DS and YG. Catalysis depends on Cys77, which acts as the Proton donor/acceptor. 78 to 79 contacts substrate; the sequence is NT. Cys189 serves as the catalytic Proton donor/acceptor. 190–191 is a substrate binding site; sequence TH.

Belongs to the aspartate/glutamate racemases family.

It carries out the reaction L-glutamate = D-glutamate. It participates in cell wall biogenesis; peptidoglycan biosynthesis. Its function is as follows. Provides the (R)-glutamate required for cell wall biosynthesis. The chain is Glutamate racemase from Neisseria meningitidis serogroup A / serotype 4A (strain DSM 15465 / Z2491).